A 436-amino-acid polypeptide reads, in one-letter code: Exodeoxyribonuclease 7 large subunit (436 aa).

The segment at 412-436 (PGGVMNKNSNTTDSTDNTENGTGEA) is disordered. Over residues 417–436 (NKNSNTTDSTDNTENGTGEA) the composition is skewed to low complexity.

It belongs to the XseA family. Heterooligomer composed of large and small subunits.

It is found in the cytoplasm. It carries out the reaction Exonucleolytic cleavage in either 5'- to 3'- or 3'- to 5'-direction to yield nucleoside 5'-phosphates.. Its function is as follows. Bidirectionally degrades single-stranded DNA into large acid-insoluble oligonucleotides, which are then degraded further into small acid-soluble oligonucleotides. The chain is Exodeoxyribonuclease 7 large subunit from Corynebacterium jeikeium (strain K411).